The following is a 772-amino-acid chain: Acyl-homoserine lactone acylase PvdQ (772 aa).

An N-terminal signal peptide occupies residues 1 to 28 (MPVFPFCRPMTCAGLAAALVAFSVGVQA). The propeptide at 199–220 (AQSSAGFASALARQERFAAERG) is spacer peptide. Ser221 (nucleophile) is an active-site residue.

The protein belongs to the peptidase S45 family. As to quaternary structure, heterodimer of an alpha subunit and a beta subunit processed from the same precursor.

It is found in the periplasm. It carries out the reaction an N-acyl-L-homoserine lactone + H2O = L-homoserine lactone + a carboxylate. Functionally, catalyzes the deacylation of acyl-homoserine lactone (AHL or acyl-HSL), releasing homoserine lactone (HSL) and the corresponding fatty acid. Possesses a specificity for the degradation of long-chain acyl-HSLs (side chains of 11 to 14 carbons in length). The chain is Acyl-homoserine lactone acylase PvdQ (pvdQ) from Pseudomonas putida (strain ATCC 47054 / DSM 6125 / CFBP 8728 / NCIMB 11950 / KT2440).